Here is a 255-residue protein sequence, read N- to C-terminus: Ribonuclease HII (255 aa).

In terms of domain architecture, RNase H type-2 spans 58-247 (RYIAGIDEAG…VKSMVLGARY (190 aa)). A divalent metal cation is bound by residues D64, E65, and D156.

This sequence belongs to the RNase HII family. It depends on Mn(2+) as a cofactor. Mg(2+) serves as cofactor.

It is found in the cytoplasm. It carries out the reaction Endonucleolytic cleavage to 5'-phosphomonoester.. Endonuclease that specifically degrades the RNA of RNA-DNA hybrids. The chain is Ribonuclease HII from Syntrophomonas wolfei subsp. wolfei (strain DSM 2245B / Goettingen).